The sequence spans 352 residues: Minor capsid protein VP2 (352 aa).

Residue Gly-2 is the site of N-myristoyl glycine; by host attachment. Residues 273-308 (SGEFIEKFEAPGGANQRTAPQWMLPLLLGLYGSVTS) are D1. Residues 290–310 (TAPQWMLPLLLGLYGSVTSAL) form a helical membrane-spanning segment. Residues 313–352 (YEDGPNKKKRKLSRGSSQKTKGTSASAKARHKRRNRSSRS) are disordered. The interval 313-352 (YEDGPNKKKRKLSRGSSQKTKGTSASAKARHKRRNRSSRS) is DNA-binding. The short motif at 316–324 (GPNKKKRKL) is the Nuclear localization signal element. Residues 326-338 (RGSSQKTKGTSAS) show a composition bias toward polar residues. Basic residues predominate over residues 340–352 (KARHKRRNRSSRS).

This sequence belongs to the polyomaviruses capsid protein VP2 family. Forms homooligomers, and heterooligomers with VP3 in the endoplasmic reticulum membrane. Interacts (via D1 domain) with VP1. As to quaternary structure, interacts (via D1 domain) with VP1. Interacts (via C-terminus) with host SP1, this is probably also the case for VP2; this interaction represses SP1 activation of the SV40 early promoter and participates in virion assembly. Interacts (via nuclear localization signal) with host importin alpha2-beta heterodimer. In terms of assembly, oligomerizes with VP3 in the nucleus.

The protein resides in the virion. It is found in the host nucleus. It localises to the host endoplasmic reticulum. The protein localises to the host endoplasmic reticulum membrane. Its function is as follows. Structural protein that resides within the core of the capsid surrounded by 72 VP1 pentamers. Following virus endocytosis and trafficking to the endoplasmic reticulum, VP2 and VP3 form oligomers and integrate into the endoplasmic reticulum membrane. Heterooligomer VP2-VP3 may create a viroporin for transporting the viral genome across the endoplasmic reticulum membrane to the cytoplasm. Nuclear entry of the viral DNA involves the selective exposure and importin recognition of VP2 or VP3 nuclear localization signal (shared C-terminus). Plays a role in virion assembly within the nucleus in particular through a DNA-binding domain located in the C-terminal region. An N-terminal myristoylation suggests a scaffold function for virion assembly. The viral progenies exit the cells by lytic release. Isoform VP2 may repress SP1 activation of the SV40 early promoter, via specific protein-protein and protein-DNA interactions. In terms of biological role, structural protein that resides within the core of the capsid surrounded by 72 VP1 pentamers. Following virus entry, VP2 and VP3 form oligomers and integrate into the endoplasmic reticulum membrane. Heterooligomer VP2-VP3 may create a viroporin for transporting the viral genome across the endoplasmic reticulum membrane. Essential for focus formation and virus endoplasmic reticulum-to-cytosol membrane transport, required to recruit selective cellular components to the foci in the ER membrane. Nuclear entry of the viral DNA involves the selective exposure and importin recognition of VP2 or VP3 nuclear localization signal (shared C-terminus). Isoform VP3 represses SP1 activation of the SV40 early promoter, via specific protein-protein and protein-DNA interactions. SP1 additionally participates in recruiting VP3 to the SV40 minichromosome during SV40 assembly. Plays a role in virion assembly within the nucleus. May initiate host cell lysis when associated with VP4. Viroporin inducing perforation of cellular membranes to trigger virus progeny release. Forms pores of 3 nm inner diameter. VP4 is expressed about 24 hours after the late structural proteins and is not incorporated into the mature virion. The sequence is that of Minor capsid protein VP2 from Simian virus 40 (SV40).